Consider the following 319-residue polypeptide: Acetyl-coenzyme A carboxylase carboxyl transferase subunit alpha (319 aa).

A CoA carboxyltransferase C-terminal domain is found at 35–296 (NLDEEVQRLR…KAQLLADLND (262 aa)).

This sequence belongs to the AccA family. Acetyl-CoA carboxylase is a heterohexamer composed of biotin carboxyl carrier protein (AccB), biotin carboxylase (AccC) and two subunits each of ACCase subunit alpha (AccA) and ACCase subunit beta (AccD).

The protein localises to the cytoplasm. It carries out the reaction N(6)-carboxybiotinyl-L-lysyl-[protein] + acetyl-CoA = N(6)-biotinyl-L-lysyl-[protein] + malonyl-CoA. Its pathway is lipid metabolism; malonyl-CoA biosynthesis; malonyl-CoA from acetyl-CoA: step 1/1. Its function is as follows. Component of the acetyl coenzyme A carboxylase (ACC) complex. First, biotin carboxylase catalyzes the carboxylation of biotin on its carrier protein (BCCP) and then the CO(2) group is transferred by the carboxyltransferase to acetyl-CoA to form malonyl-CoA. This chain is Acetyl-coenzyme A carboxylase carboxyl transferase subunit alpha, found in Yersinia pseudotuberculosis serotype O:3 (strain YPIII).